Reading from the N-terminus, the 670-residue chain is tRNA 5-methylaminomethyl-2-thiouridine biosynthesis bifunctional protein MnmC (670 aa).

The interval 1–242 is tRNA (mnm(5)s(2)U34)-methyltransferase; sequence MTFSVQHAEI…KRECLSGLKI (242 aa). Residues 269-670 are FAD-dependent cmnm(5)s(2)U34 oxidoreductase; that stretch reads IGGGIASLCA…KKWLKGSKVE (402 aa).

In the N-terminal section; belongs to the methyltransferase superfamily. tRNA (mnm(5)s(2)U34)-methyltransferase family. This sequence in the C-terminal section; belongs to the DAO family. It depends on FAD as a cofactor.

The protein localises to the cytoplasm. It catalyses the reaction 5-aminomethyl-2-thiouridine(34) in tRNA + S-adenosyl-L-methionine = 5-methylaminomethyl-2-thiouridine(34) in tRNA + S-adenosyl-L-homocysteine + H(+). Its function is as follows. Catalyzes the last two steps in the biosynthesis of 5-methylaminomethyl-2-thiouridine (mnm(5)s(2)U) at the wobble position (U34) in tRNA. Catalyzes the FAD-dependent demodification of cmnm(5)s(2)U34 to nm(5)s(2)U34, followed by the transfer of a methyl group from S-adenosyl-L-methionine to nm(5)s(2)U34, to form mnm(5)s(2)U34. This chain is tRNA 5-methylaminomethyl-2-thiouridine biosynthesis bifunctional protein MnmC, found in Haemophilus influenzae (strain PittGG).